The following is a 101-amino-acid chain: Parathymosin (101 aa).

Positions 1–101 are disordered; it reads MSEKSVEAAA…RQKTENGASA (101 aa). Ser2 bears the N-acetylserine mark. Residue Ser2 is modified to Phosphoserine. At Lys4 the chain carries N6-acetyllysine. 2 positions are modified to phosphoserine: Ser5 and Ser13. Over residues 13-37 the composition is skewed to basic and acidic residues; that stretch reads SAKDLKEKKDKVEEKAGRKERKKEV. Lys15 carries the post-translational modification N6-acetyllysine. Residues 38 to 74 show a composition bias toward acidic residues; it reads VEEEENGAEEEEEETAEDGEDDDEGDEEDEEEEEEDE. The residue at position 52 (Thr52) is a Phosphothreonine. Lys91 bears the N6-acetyllysine mark.

Belongs to the pro/parathymosin family.

In terms of biological role, parathymosin may mediate immune function by blocking the effect of prothymosin alpha which confers resistance to certain opportunistic infections. This is Parathymosin (Ptms) from Mus musculus (Mouse).